We begin with the raw amino-acid sequence, 238 residues long: Bacterial microcompartment shell protein PduB (238 aa).

BMC circularly permuted domains lie at 14-125 (FVGA…VYNA) and 126-225 (KAGH…LSQF). The cysteines at positions 158 and 197 are disulfide-linked.

Belongs to the EutL/PduB family. As to quaternary structure, homotrimerizes to form a pseudohexamer with a central pore 7.5 Angstroms wide and 22 Angstroms long; the pore channel in the crystal binds up to 4 glycerol molecules. A disulfide bond forms in the pore, it is not clear if this is an artifact. The trimers pack into an array.

It localises to the bacterial microcompartment. It functions in the pathway polyol metabolism; 1,2-propanediol degradation. Its function is as follows. One of the major shell proteins of the bacterial microcompartment (BMC) dedicated to 1,2-propanediol (1,2-PD) degradation. Probably involved in a propanediol fermentation/reuterin formation pathway. This Limosilactobacillus reuteri (strain DSM 20016) (Lactobacillus reuteri) protein is Bacterial microcompartment shell protein PduB.